Consider the following 1188-residue polypeptide: DNA-directed RNA polymerase subunit beta (1188 aa).

A disordered region spans residues 1149–1188 (ELRDLDEGEDDDVMHVDDLEKAREKQAQETPEVSENSEEK). Residues 1161–1175 (VMHVDDLEKAREKQA) are compositionally biased toward basic and acidic residues.

This sequence belongs to the RNA polymerase beta chain family. In terms of assembly, the RNAP catalytic core consists of 2 alpha, 1 beta, 1 beta' and 1 omega subunit. When a sigma factor is associated with the core the holoenzyme is formed, which can initiate transcription.

It carries out the reaction RNA(n) + a ribonucleoside 5'-triphosphate = RNA(n+1) + diphosphate. In terms of biological role, DNA-dependent RNA polymerase catalyzes the transcription of DNA into RNA using the four ribonucleoside triphosphates as substrates. This chain is DNA-directed RNA polymerase subunit beta, found in Streptococcus uberis (strain ATCC BAA-854 / 0140J).